A 238-amino-acid polypeptide reads, in one-letter code: uncharacterized protein (238 aa).

4 helical membrane passes run 13 to 33, 40 to 60, 107 to 127, and 140 to 160; these read TLFF…FGII, GSVG…LILG, VVLI…FCQV, and VISL…PMAF. 4Fe-4S ferredoxin-type domains are found at residues 178 to 208 and 204 to 233; these read PFFQ…TEKL and ITEK…FSYA. Cys-188, Cys-191, Cys-194, Cys-198, Cys-213, Cys-216, Cys-219, and Cys-223 together coordinate [4Fe-4S] cluster.

Its subcellular location is the cell membrane. This is an uncharacterized protein from Methanocaldococcus jannaschii (strain ATCC 43067 / DSM 2661 / JAL-1 / JCM 10045 / NBRC 100440) (Methanococcus jannaschii).